The primary structure comprises 357 residues: MNKKPIILGIESSCDETAASIITENEQGMPTILSSIVSSQVDVHKEFGGVVPELAARSHMEKIDLITKKAFDKSGVKMEDLDAIAATAGPGLMVCLSVGLSFGKAMASSLNKPFIAVNHLEGHALSPKLNSELNYPYLLLLISGGHTQFLSVQGLGNYKRLGTTIDDAVGEAFDKTAKLLGIEFPGGPQIEVYAKKGDPNKYELPKPIFHKGGCNLSFAGLKTAVLKISKQIKTEQEKYDLAASFQKTIEEILYKKSKIAFEEFKKMNTINKNKFVVAGGVAANKRIREVLTNLCKEEEFEAIFPPINLCGDNAAMIAMVGLEKFKLKQFSELDSPAKPRWPLDADAAFLKGAGVRL.

2 residues coordinate Fe cation: His-119 and His-123. Substrate contacts are provided by residues 141–145 (LISGG), Asp-174, Gly-187, and Asn-284. Asp-312 serves as a coordination point for Fe cation.

This sequence belongs to the KAE1 / TsaD family. Requires Fe(2+) as cofactor.

Its subcellular location is the cytoplasm. The catalysed reaction is L-threonylcarbamoyladenylate + adenosine(37) in tRNA = N(6)-L-threonylcarbamoyladenosine(37) in tRNA + AMP + H(+). In terms of biological role, required for the formation of a threonylcarbamoyl group on adenosine at position 37 (t(6)A37) in tRNAs that read codons beginning with adenine. Is involved in the transfer of the threonylcarbamoyl moiety of threonylcarbamoyl-AMP (TC-AMP) to the N6 group of A37, together with TsaE and TsaB. TsaD likely plays a direct catalytic role in this reaction. This Pelagibacter ubique (strain HTCC1062) protein is tRNA N6-adenosine threonylcarbamoyltransferase.